The primary structure comprises 261 residues: (S)-ureidoglycine aminohydrolase (261 aa).

The region spanning 184–230 (LSFAPGASHGYIETHVQEHGAYILSGQGVYNLDNNWIPVKKGDYIFM) is the Cupin type-2 domain. Mn(2+)-binding residues include glutamate 196, histidine 198, histidine 202, and glutamine 236. Glutamate 196 contacts substrate. Glutamine 236, tyrosine 249, and lysine 253 together coordinate substrate.

This sequence belongs to the UGHY family. In terms of assembly, monomer. It depends on Mn(2+) as a cofactor.

It is found in the cytoplasm. The enzyme catalyses (S)-2-ureidoglycine + H2O = (S)-ureidoglycolate + NH4(+). Functionally, involved in the anaerobic nitrogen utilization via the assimilation of allantoin. Catalyzes the second stereospecific hydrolysis reaction (deamination) of the allantoin degradation pathway, producing S-ureidoglycolate and ammonia from S-ureidoglycine. This Escherichia coli (strain K12) protein is (S)-ureidoglycine aminohydrolase (allE).